Consider the following 209-residue polypeptide: Adenylate kinase (209 aa).

59-64 serves as a coordination point for ATP; the sequence is GSGKRT. Residues 79 to 108 form an NMP region; the sequence is SSGQVLTRGVESGSETSQLAHSYVSRGERV. Residues S80, 106–108, 135–138, and Q142 each bind AMP; these read ERV and GYPR. Residues 172-205 are LID; that stretch reads HRRYDPATNKXYHMLDNPPPGGRCRVMRTAPAEG. Position 173 (R173) interacts with ATP.

Belongs to the adenylate kinase family. In terms of assembly, monomer.

The protein localises to the cytoplasm. It carries out the reaction AMP + ATP = 2 ADP. Its function is as follows. Catalyzes the reversible transfer of the terminal phosphate group between ATP and AMP. Plays an important role in cellular energy homeostasis and in adenine nucleotide metabolism. In Trypanosoma brucei rhodesiense, this protein is Adenylate kinase.